We begin with the raw amino-acid sequence, 699 residues long: SPS-sensor serine protease component SSY5 (699 aa).

Disordered regions lie at residues 1–113 (MVRF…LQGF) and 128–158 (PVKEEESQDTQNTLDVSSSTSSTLATSENAR). Positions 1-381 (MVRFFGLNKK…YCVKDYIKKA (381 aa)) are excised as a propeptide. A compositionally biased stretch (polar residues) spans 24 to 38 (NEQNAAETSSSNVSG). Residues 39 to 51 (NEERIDPNSHDTN) are compositionally biased toward basic and acidic residues. A compositionally biased stretch (low complexity) spans 61-78 (STTFGSSIQSSSIFSRGR). Positions 83–93 (TGASSSMATSE) are enriched in polar residues. Composition is skewed to low complexity over residues 97–109 (HSSGHSGSKNSKN) and 144–154 (SSSTSSTLATS). The segment at 459–699 (FAITCAHVVL…QWDIDPQLDG (241 aa)) is serine protease. Residues His465, Asp545, and Ser640 each act as charge relay system in the active site.

It belongs to the peptidase S64 family. In terms of assembly, component of the plasma membrane SPS (SSY1-PTR3-SSY5) amino acid sensor complex. The propeptide is autoproteolytically cleaved from the catalytic domain but remains associated, forming an inactive protease complex. This processing occurs even in the absence of signaling.

It is found in the cell membrane. Functionally, protease component of the SPS-sensor system, which regulates the expression of several amino acid-metabolizing enzymes and amino acid- and peptide-permeases in response to extracellular amino acid levels by controlling the activity of two transcription factors, STP1 and STP2. Catalyzes the activation of these transcription factors, which are synthesized as latent cytoplasmic precursors, by proteolytic removal of an N-terminal inhibitory domain containing cytoplasmic retention motifs. SSY5 binds as an inactive protease complex to STP1. In response to extracellular amino acids and dependent on the other SPS-sensor components, the inhibitory propeptide is induced to dissociate, and thereby enables the catalytic domain to process STP1. The chain is SPS-sensor serine protease component SSY5 (SSY5) from Saccharomyces cerevisiae (strain ATCC 204508 / S288c) (Baker's yeast).